The chain runs to 86 residues: Small muscular protein (86 aa).

The segment at 20-64 (MGAFRPGAGQPPRRKECTPEIEEGAPPTSDEEKKPIPGAKKLPGP) is disordered.

It belongs to the SMPX family.

Plays a role in the regulatory network through which muscle cells coordinate their structural and functional states during growth, adaptation, and repair. This chain is Small muscular protein (SMPX), found in Bos taurus (Bovine).